Consider the following 3430-residue polypeptide: Genome polyprotein (3430 aa).

The tract at residues 2–15 (SKKPGGPGKNRAVN) is interaction with host EXOC1. The Cytoplasmic segment spans residues 2-105 (SKKPGGPGKN…NRRSTKQKKR (104 aa)). The interval 37–72 (LIDGKGPIRFVLALLAFFRFTAIAPTRAVLDRWRGV) is hydrophobic; homodimerization of capsid protein C. Positions 106 to 123 (GGTAGFTILLGLIACAGA) are cleaved as a propeptide — ER anchor for the capsid protein C, removed in mature form by serine protease NS3. A helical transmembrane segment spans residues 106–126 (GGTAGFTILLGLIACAGAVTL). Residues 127-248 (SNFQGKVMMT…KATRYLVKTE (122 aa)) lie on the Extracellular side of the membrane. A glycan (N-linked (GlcNAc...) asparagine; by host) is linked at Asn-138. The chain crosses the membrane as a helical span at residues 249–269 (SWILRNPGYALVAAVIGWMLG). Residues 270-275 (SNTMQR) lie on the Cytoplasmic side of the membrane. A helical membrane pass occupies residues 276-290 (VVFAILLLLVAPAYS). Topologically, residues 291–739 (FNCLGMSNRD…QVFGGAFRSL (449 aa)) are extracellular. Disulfide bonds link Cys-293–Cys-320, Cys-350–Cys-406, Cys-364–Cys-395, Cys-382–Cys-411, Cys-476–Cys-574, and Cys-591–Cys-622. Positions 388–401 (DRGWGNGCGLFGKG) are fusion peptide. The chain crosses the membrane as a helical span at residues 740–760 (FGGMSWITQGLLGALLLWMGI). The Cytoplasmic portion of the chain corresponds to 761 to 766 (NARDRS). Residues 767 to 787 (IAMTFLAVGGVLLFLSVNVHA) form a helical membrane-spanning segment. Topologically, residues 788-1212 (DTGCAIDIGR…AFAEANSGGD (425 aa)) are extracellular. 2 disulfide bridges follow: Cys-791–Cys-802 and Cys-842–Cys-930. N-linked (GlcNAc...) asparagine; by host glycosylation is found at Asn-917, Asn-962, and Asn-994. Cystine bridges form between Cys-966–Cys-1010, Cys-1067–Cys-1116, Cys-1078–Cys-1099, and Cys-1100–Cys-1103. A helical transmembrane segment spans residues 1213 to 1233 (VVHLALMATFKIQPVFLVASF). At 1234–1243 (LKARWTNQES) the chain is on the cytoplasmic side. Residues 1244–1264 (ILLMLAAAFFQMAYYDAKNVL) form a helical membrane-spanning segment. Topologically, residues 1265 to 1278 (SWEVPDVLNSLSVA) are lumenal. The helical transmembrane segment at 1279–1299 (WMILRAISFTNTSNVVVPLLA) threads the bilayer. Residues 1300-1307 (LLTPGLKC) are Cytoplasmic-facing. A helical transmembrane segment spans residues 1308–1328 (LNLDVYRILLLMVGVGSLIKE). Over 1329–1340 (KRSSAAKKKGAC) the chain is Lumenal. Residues 1341 to 1361 (LICLALASTGVFNPMILAAGL) form a helical membrane-spanning segment. Over 1362 to 1371 (MACDPNRKRG) the chain is Cytoplasmic. Residues 1372–1392 (WPATEVMTAVGLMFAIVGGLA) traverse the membrane as a helical segment. At 1393–1395 (ELD) the chain is on the lumenal side. The helical transmembrane segment at 1396–1416 (IDSMAIPMTIAGLMFAAFVIS) threads the bilayer. Topologically, residues 1417-1473 (GKSTDMWIERTADITWESDAEITGSSERVDVRLDDDGNFQLMNDPGAPWKIWMLRMA) are cytoplasmic. Residues 1424–1463 (IERTADITWESDAEITGSSERVDVRLDDDGNFQLMNDPGA) are interacts with and activates NS3 protease. Positions 1474–1494 (CLAISAYTPWAILPSVIGFWI) form an intramembrane region, helical. Topologically, residues 1495-2170 (TLQYTKRGGV…RMALEELPDA (676 aa)) are cytoplasmic. Residues 1502–1679 (GGVLWDTPSP…ERMEEPAPAG (178 aa)) enclose the Peptidase S7 domain. Catalysis depends on charge relay system; for serine protease NS3 activity residues His-1552, Asp-1576, and Ser-1636. A Helicase ATP-binding domain is found at 1682–1838 (PEMLRKKQIT…ESNAPISDMQ (157 aa)). Residues 1686 to 1689 (RKKQ) are important for RNA-binding. Residue 1695–1702 (LHPGAGKT) participates in ATP binding. The DEAH box signature appears at 1786–1789 (DEAH). The region spanning 1849–2014 (GYEWITEYVG…GLVAQLYQPE (166 aa)) is the Helicase C-terminal domain. N6-acetyllysine; by host is present on Lys-1890. A regulates the ATPase activity of NS3 helicase region spans residues 2165–2169 (EELPD). A helical membrane pass occupies residues 2171 to 2191 (LQTIVLIALLSVMSLGVFFLL). Over 2192–2196 (MQRKG) the chain is Lumenal. An intramembrane region (helical) is located at residues 2197–2217 (IGKIGLGGVILGAATFFCWMA). Position 2218 (Glu-2218) is a topological domain, lumenal. A helical transmembrane segment spans residues 2219-2239 (VPGTKIAGMLLLSLLLMIVLI). Residues 2240-2254 (PEPEKQRSQTDNQLA) lie on the Cytoplasmic side of the membrane. Residues 2255-2275 (VFLICVLTLVGAVAANEMGWL) form a helical membrane-spanning segment. The Lumenal segment spans residues 2276–2309 (DKTKNDIGSLLGHRPEARETTLGVESFLLDLRPA). The helical intramembrane region spans 2310–2330 (TAWSLYAVTTAVLTPLLKHLI). Residues 2331–2377 (TSDYINTSLTSINVQASALFTLARGFPFVDVGVSALLLAVGCWGQVT) are Lumenal-facing. Residues 2378 to 2398 (LTVTVTAAALLFCHYAYMVPG) form a helical membrane-spanning segment. Residues 2399-2441 (WQAEAMRSAQRRTAAGIMKNVVVDGIVATDVPELERTTPVMQK) are Cytoplasmic-facing. The chain crosses the membrane as a helical span at residues 2442 to 2462 (KVGQIILILVSMAAVVVNPSV). Residues 2463–2467 (RTVRE) are Lumenal-facing. A helical transmembrane segment spans residues 2468 to 2488 (AGILTTAAAVTLWENGASSVW). Residues 2489 to 3430 (NATTAIGLCH…DTIVVEDTVL (942 aa)) are Cytoplasmic-facing. The region spanning 2526–2791 (GGAKGRTLGE…DVNLGSGTRA (266 aa)) is the mRNA cap 0-1 NS5-type MT domain. Position 2581 (Ser-2581) interacts with S-adenosyl-L-methionine. Position 2581 is a phosphoserine (Ser-2581). Lys-2586 acts as the For 2'-O-MTase activity in catalysis. S-adenosyl-L-methionine is bound by residues Gly-2611, Trp-2612, Thr-2629, Lys-2630, Asp-2656, and Val-2657. Catalysis depends on Asp-2671, which acts as the For 2'-O-MTase activity. Ile-2672 is a binding site for S-adenosyl-L-methionine. Catalysis depends on for 2'-O-MTase activity residues Lys-2707 and Glu-2743. Tyr-2745 contacts S-adenosyl-L-methionine. Positions 2914–2916 (RDK) match the Nuclear localization signal motif. The Zn(2+) site is built by Glu-2965, His-2969, Cys-2974, and Cys-2977. Residues 3055 to 3207 (GKVYADDTAG…KPLDDRFATS (153 aa)) form the RdRp catalytic domain. The Zn(2+) site is built by His-3242, Cys-3258, and Cys-3377. Positions 3428–3430 (TVL) match the PDZ-binding motif.

This sequence in the N-terminal section; belongs to the class I-like SAM-binding methyltransferase superfamily. mRNA cap 0-1 NS5-type methyltransferase family. As to quaternary structure, homodimer. Interacts (via N-terminus) with host EXOC1 (via C-terminus); this interaction results in EXOC1 degradation through the proteasome degradation pathway. Interacts with host DDX56; this interaction plays an important role in genomic RNA encapsidation. In terms of assembly, forms heterodimers with envelope protein E in the endoplasmic reticulum and Golgi. Homodimer; in the endoplasmic reticulum and Golgi. As to quaternary structure, homodimer; Homohexamer when secreted. Interacts with envelope protein E. NS1 interacts with NS4B. Interacts with host complement protein CFH; this interaction leads to the degradation of C3. In terms of assembly, interacts (via N-terminus) with serine protease NS3. Forms a heterodimer with serine protease NS3. May form homooligomers. As to quaternary structure, forms a heterodimer with NS2B. Interacts with NS4B. Interacts with unphosphorylated RNA-directed RNA polymerase NS5; this interaction stimulates RNA-directed RNA polymerase NS5 guanylyltransferase activity. In terms of assembly, interacts with Serine protease/Helicase NS3. Interacts with NS1. Homodimer. Interacts with host STAT2; this interaction inhibits the phosphorylation of the latter, and, when all viral proteins are present (polyprotein), targets STAT2 for degradation. Interacts with host PAF1 complex. Post-translationally, specific enzymatic cleavages in vivo yield mature proteins. Cleavages in the lumen of endoplasmic reticulum are performed by host signal peptidase, whereas cleavages in the cytoplasmic side are performed by serine protease NS3. Signal cleavage at the 2K-4B site requires a prior NS3 protease-mediated cleavage at the 4A-2K site. Cleaved in post-Golgi vesicles by a host furin, releasing the mature small envelope protein M, and peptide pr. This cleavage is incomplete as up to 30% of viral particles still carry uncleaved prM. In terms of processing, not N-glycosylated. Post-translationally, N-glycosylated. The excreted form is glycosylated and this is required for efficient secretion of the protein from infected cells. Acetylated by host KAT5. Acetylation modulates NS3 RNA-binding and unwinding activities and plays an important positive role for viral replication. In terms of processing, phosphorylated on serines residues. This phosphorylation may trigger NS5 nuclear localization.

It is found in the virion. The protein localises to the host nucleus. It localises to the host cytoplasm. The protein resides in the host perinuclear region. Its subcellular location is the secreted. It is found in the virion membrane. The protein localises to the host endoplasmic reticulum membrane. It catalyses the reaction Selective hydrolysis of -Xaa-Xaa-|-Yaa- bonds in which each of the Xaa can be either Arg or Lys and Yaa can be either Ser or Ala.. It carries out the reaction RNA(n) + a ribonucleoside 5'-triphosphate = RNA(n+1) + diphosphate. The catalysed reaction is a ribonucleoside 5'-triphosphate + H2O = a ribonucleoside 5'-diphosphate + phosphate + H(+). The enzyme catalyses ATP + H2O = ADP + phosphate + H(+). It catalyses the reaction a 5'-end (5'-triphosphoguanosine)-ribonucleoside in mRNA + S-adenosyl-L-methionine = a 5'-end (N(7)-methyl 5'-triphosphoguanosine)-ribonucleoside in mRNA + S-adenosyl-L-homocysteine. It carries out the reaction a 5'-end (N(7)-methyl 5'-triphosphoguanosine)-ribonucleoside in mRNA + S-adenosyl-L-methionine = a 5'-end (N(7)-methyl 5'-triphosphoguanosine)-(2'-O-methyl-ribonucleoside) in mRNA + S-adenosyl-L-homocysteine + H(+). Plays a role in virus budding by binding to the cell membrane and gathering the viral RNA into a nucleocapsid that forms the core of a mature virus particle. During virus entry, may induce genome penetration into the host cytoplasm after hemifusion induced by the surface proteins. Can migrate to the cell nucleus where it modulates host functions. Overcomes the anti-viral effects of host EXOC1 by sequestering and degrading the latter through the proteasome degradation pathway. Its function is as follows. Inhibits RNA silencing by interfering with host Dicer. Functionally, prevents premature fusion activity of envelope proteins in trans-Golgi by binding to envelope protein E at pH6.0. After virion release in extracellular space, gets dissociated from E dimers. In terms of biological role, acts as a chaperone for envelope protein E during intracellular virion assembly by masking and inactivating envelope protein E fusion peptide. prM is the only viral peptide matured by host furin in the trans-Golgi network probably to avoid catastrophic activation of the viral fusion activity in acidic Golgi compartment prior to virion release. prM-E cleavage is inefficient, and many virions are only partially matured. These uncleaved prM would play a role in immune evasion. May play a role in virus budding. Exerts cytotoxic effects by activating a mitochondrial apoptotic pathway through M ectodomain. May display a viroporin activity. Its function is as follows. Binds to host cell surface receptor and mediates fusion between viral and cellular membranes. Envelope protein is synthesized in the endoplasmic reticulum in the form of heterodimer with protein prM. They play a role in virion budding in the ER, and the newly formed immature particle is covered with 60 spikes composed of heterodimer between precursor prM and envelope protein E. The virion is transported to the Golgi apparatus where the low pH causes dissociation of PrM-E heterodimers and formation of E homodimers. prM-E cleavage is inefficient, and many virions are only partially matured. These uncleaved prM would play a role in immune evasion. Functionally, involved in immune evasion, pathogenesis and viral replication. Once cleaved off the polyprotein, is targeted to three destinations: the viral replication cycle, the plasma membrane and the extracellular compartment. Essential for viral replication. Required for formation of the replication complex and recruitment of other non-structural proteins to the ER-derived membrane structures. Excreted as a hexameric lipoparticle that plays a role against host immune response. Antagonizing the complement function. Binds to the host macrophages and dendritic cells. Inhibits signal transduction originating from Toll-like receptor 3 (TLR3). In terms of biological role, component of the viral RNA replication complex that functions in virion assembly and antagonizes the host alpha/beta interferon antiviral response. Required cofactor for the serine protease function of NS3. May have membrane-destabilizing activity and form viroporins. Its function is as follows. Displays three enzymatic activities: serine protease, NTPase and RNA helicase. NS3 serine protease, in association with NS2B, performs its autocleavage and cleaves the polyprotein at dibasic sites in the cytoplasm: C-prM, NS2A-NS2B, NS2B-NS3, NS3-NS4A, NS4A-2K and NS4B-NS5. NS3 RNA helicase binds RNA and unwinds dsRNA in the 3' to 5' direction. NS3 supports the separation of RNA daughter and template strands during viral replication. The helicase part is involved in the inhibition of phosphorylation of host STAT1, and thereby inhibition of host type-I IFN signaling. In addition, NS3 assists the initiation of replication by unwinding the RNA secondary structure in the 3' non-translated region (NTR). Inhibits STAT2 translocation in the nucleus after IFN-alpha treatment. Functionally, regulates the ATPase activity of the NS3 helicase activity. NS4A allows NS3 helicase to conserve energy during unwinding. In terms of biological role, functions as a signal peptide for NS4B and is required for the interferon antagonism activity of the latter. Induces the formation of ER-derived membrane vesicles where the viral replication takes place. Inhibits interferon (IFN)-induced host STAT1 phosphorylation and nuclear translocation, thereby preventing the establishment of cellular antiviral state by blocking the IFN-alpha/beta pathway. Inhibits STAT2 translocation in the nucleus after IFN-alpha treatment. Its function is as follows. Replicates the viral (+) and (-) RNA genome, and performs the capping of genomes in the cytoplasm. NS5 methylates viral RNA cap at guanine N-7 and ribose 2'-O positions. Besides its role in RNA genome replication, also prevents the establishment of cellular antiviral state by blocking the interferon-alpha/beta (IFN-alpha/beta) signaling pathway. Inhibits host TYK2 and STAT2 phosphorylation, thereby preventing activation of JAK-STAT signaling pathway. This is Genome polyprotein from Aedes (Tropical bont tick).